The primary structure comprises 418 residues: UDP-N-acetylglucosamine 1-carboxyvinyltransferase (418 aa).

22–23 (KN) contacts phosphoenolpyruvate. Position 91 (arginine 91) interacts with UDP-N-acetyl-alpha-D-glucosamine. The active-site Proton donor is the cysteine 115. Cysteine 115 carries the 2-(S-cysteinyl)pyruvic acid O-phosphothioketal modification. UDP-N-acetyl-alpha-D-glucosamine-binding positions include 120–124 (RPVDL), aspartate 305, and isoleucine 327.

This sequence belongs to the EPSP synthase family. MurA subfamily.

Its subcellular location is the cytoplasm. The enzyme catalyses phosphoenolpyruvate + UDP-N-acetyl-alpha-D-glucosamine = UDP-N-acetyl-3-O-(1-carboxyvinyl)-alpha-D-glucosamine + phosphate. The protein operates within cell wall biogenesis; peptidoglycan biosynthesis. In terms of biological role, cell wall formation. Adds enolpyruvyl to UDP-N-acetylglucosamine. The sequence is that of UDP-N-acetylglucosamine 1-carboxyvinyltransferase from Wigglesworthia glossinidia brevipalpis.